A 217-amino-acid polypeptide reads, in one-letter code: uncharacterized protein (217 aa).

2 helical membrane-spanning segments follow: residues 151 to 171 (LIPF…HSLF) and 177 to 197 (ISFH…FILF).

The protein resides in the mitochondrion membrane. This is an uncharacterized protein from Schizosaccharomyces pombe (strain 972 / ATCC 24843) (Fission yeast).